A 125-amino-acid chain; its full sequence is Putative zinc finger A20 and AN1 domain-containing stress-associated protein 8 (125 aa).

The segment at 2 to 36 (TGEPSLCIRGCGFFSTSQTKNLCSKCYNDFLKDES) adopts an A20-type zinc-finger fold. The Zn(2+) site is built by C8, C12, C24, C27, C80, C82, H96, and C98. The AN1-type; degenerate zinc-finger motif lies at 61–106 (LGSKGGCACKKKVGLLGFHCRCGHLFFASHRYPEEHSCPSDYKSAA).

Its function is as follows. May be involved in environmental stress response. This is Putative zinc finger A20 and AN1 domain-containing stress-associated protein 8 (SAP8) from Arabidopsis thaliana (Mouse-ear cress).